A 294-amino-acid chain; its full sequence is Ribosomal protein L11 methyltransferase (294 aa).

4 residues coordinate S-adenosyl-L-methionine: Thr-146, Gly-167, Asp-189, and Asn-231.

Belongs to the methyltransferase superfamily. PrmA family.

Its subcellular location is the cytoplasm. The catalysed reaction is L-lysyl-[protein] + 3 S-adenosyl-L-methionine = N(6),N(6),N(6)-trimethyl-L-lysyl-[protein] + 3 S-adenosyl-L-homocysteine + 3 H(+). Functionally, methylates ribosomal protein L11. The protein is Ribosomal protein L11 methyltransferase of Aliivibrio salmonicida (strain LFI1238) (Vibrio salmonicida (strain LFI1238)).